Here is a 243-residue protein sequence, read N- to C-terminus: DNA repair protein RecO (243 aa).

This sequence belongs to the RecO family.

In terms of biological role, involved in DNA repair and RecF pathway recombination. The sequence is that of DNA repair protein RecO from Vibrio vulnificus (strain CMCP6).